We begin with the raw amino-acid sequence, 39 residues long: Conotoxin ArMSGL-013 (39 aa).

Positions 1-5 (RRSLT) are excised as a propeptide. Cystine bridges form between cysteine 12-cysteine 24, cysteine 16-cysteine 33, and cysteine 23-cysteine 37. Tryptophan 38 is modified (tryptophan amide).

The protein belongs to the conotoxin O3 superfamily. In terms of tissue distribution, expressed by the venom duct.

The protein resides in the secreted. In Conus arenatus (Sand-dusted cone), this protein is Conotoxin ArMSGL-013.